We begin with the raw amino-acid sequence, 168 residues long: Chemoreceptor glutamine deamidase CheD (168 aa).

Belongs to the CheD family. In terms of assembly, forms a complex with CheC.

The catalysed reaction is L-glutaminyl-[protein] + H2O = L-glutamyl-[protein] + NH4(+). Deamidates glutamine residues to glutamate on methyl-accepting chemotaxis receptors (MCPs). CheD-mediated MCP deamidation is required for productive communication of the conformational signals of the chemoreceptors to the CheA kinase. This chain is Chemoreceptor glutamine deamidase CheD, found in Bacillus licheniformis (strain ATCC 14580 / DSM 13 / JCM 2505 / CCUG 7422 / NBRC 12200 / NCIMB 9375 / NCTC 10341 / NRRL NRS-1264 / Gibson 46).